The sequence spans 197 residues: Protein FAM219B (197 aa).

Disordered regions lie at residues 1–77 (MATE…HRDH) and 117–142 (DENLVSLDSDSDGELESRYSSGYSSA). Phosphoserine is present on residues Ser-14, Ser-125, and Ser-127.

It belongs to the FAM219 family.

The chain is Protein FAM219B (Fam219b) from Mus musculus (Mouse).